We begin with the raw amino-acid sequence, 234 residues long: Leucyl/phenylalanyl-tRNA--protein transferase (234 aa).

Belongs to the L/F-transferase family.

The protein resides in the cytoplasm. It carries out the reaction N-terminal L-lysyl-[protein] + L-leucyl-tRNA(Leu) = N-terminal L-leucyl-L-lysyl-[protein] + tRNA(Leu) + H(+). It catalyses the reaction N-terminal L-arginyl-[protein] + L-leucyl-tRNA(Leu) = N-terminal L-leucyl-L-arginyl-[protein] + tRNA(Leu) + H(+). The catalysed reaction is L-phenylalanyl-tRNA(Phe) + an N-terminal L-alpha-aminoacyl-[protein] = an N-terminal L-phenylalanyl-L-alpha-aminoacyl-[protein] + tRNA(Phe). In terms of biological role, functions in the N-end rule pathway of protein degradation where it conjugates Leu, Phe and, less efficiently, Met from aminoacyl-tRNAs to the N-termini of proteins containing an N-terminal arginine or lysine. In Escherichia coli O157:H7 (strain EC4115 / EHEC), this protein is Leucyl/phenylalanyl-tRNA--protein transferase.